We begin with the raw amino-acid sequence, 444 residues long: MDSATNLLEQQGSAADVSGGSHPAEVEVTTQARATFGMDAEGHATGEAVTTTTATLRREGSDEDIFEQVQMILRKRRGWGPEDSLSPNDLDILEYDDELVEEDDAGCPLPSTPEDTQLIEAEMTEVLKAGVLSDEIDLGALAHNAAEQAEEFVRKVWEASWKVCHYKNLPKWLQDNDFLHRGHRPPLPSFRACFKSIFRVHTETGNIWTHLLGCIAFIGVALYFISRPSVEIQTQEKIVFGAFFIGAIVCLGFSFAFHTLSCHSVEMGRLFSKLDYCGIALLIMGSFVPWLYYGFYCHYQPKVIYLSVVSILGILSIVVSLWDKFSEPALRPLRAGVFMSFGLSGVIPAIHYSIMEGWFSQMSRASLGWLILMGLLYILGALLYALRVPERWFPGKFDIWGQSHQIFHILVIAAAFVHYHGISEMAMYRVMYSECTVPIEPITF.

Over residues 1–13 (MDSATNLLEQQGS) the composition is skewed to polar residues. The segment at 1-24 (MDSATNLLEQQGSAADVSGGSHPA) is disordered. Over 1–204 (MDSATNLLEQ…KSIFRVHTET (204 aa)) the chain is Cytoplasmic. Residues 205-225 (GNIWTHLLGCIAFIGVALYFI) form a helical membrane-spanning segment. The Extracellular segment spans residues 226–237 (SRPSVEIQTQEK). The helical transmembrane segment at 238–258 (IVFGAFFIGAIVCLGFSFAFH) threads the bilayer. Histidine 258 lines the Zn(2+) pocket. Residues 259 to 276 (TLSCHSVEMGRLFSKLDY) lie on the Cytoplasmic side of the membrane. The helical transmembrane segment at 277-297 (CGIALLIMGSFVPWLYYGFYC) threads the bilayer. The Extracellular segment spans residues 298–302 (HYQPK). The helical transmembrane segment at 303-323 (VIYLSVVSILGILSIVVSLWD) threads the bilayer. Residues 324–334 (KFSEPALRPLR) are Cytoplasmic-facing. The chain crosses the membrane as a helical span at residues 335–355 (AGVFMSFGLSGVIPAIHYSIM). Over 356–365 (EGWFSQMSRA) the chain is Extracellular. The helical transmembrane segment at 366-386 (SLGWLILMGLLYILGALLYAL) threads the bilayer. The Cytoplasmic segment spans residues 387–405 (RVPERWFPGKFDIWGQSHQ). Residues histidine 404 and histidine 408 each coordinate Zn(2+). A helical transmembrane segment spans residues 406–426 (IFHILVIAAAFVHYHGISEMA). Topologically, residues 427 to 444 (MYRVMYSECTVPIEPITF) are extracellular.

This sequence belongs to the ADIPOR family. In larval and adult brain, expressed in insulin-producing cells and in neurons of the subesophageal region. Also expressed in lateral neurons of the adult brain (at protein level). In third instar larvae, expressed in central nervous system (CNS), imaginal disk, salivary gland, fat body, gut and malphigian tubules.

It is found in the cell membrane. Functionally, adiponectin receptor. In insulin-producing cells, regulates insulin secretion and controls glucose and lipid metabolism. The sequence is that of Adiponectin receptor protein (AdipoR) from Drosophila melanogaster (Fruit fly).